We begin with the raw amino-acid sequence, 377 residues long: [2-(trimethylamino)ethyl]phosphonate dioxygenase (377 aa).

Residues 95-119 (DTDQSSEVGRTSPDVETWDSSQPAP) are disordered. [2-(trimethylamino)ethyl]phosphonate is bound at residue N187. H198 contacts 2-oxoglutarate. Positions 198 and 200 each coordinate Fe(2+). Positions 200, 201, 203, 286, and 288 each coordinate [2-(trimethylamino)ethyl]phosphonate. Residues H341, R343, and R352 each coordinate 2-oxoglutarate. Residue H341 coordinates Fe(2+).

Belongs to the gamma-BBH/TMLD family. As to quaternary structure, homodimer. Fe(2+) serves as cofactor. It depends on L-ascorbate as a cofactor.

It carries out the reaction [2-(trimethylamino)ethyl]phosphonate + 2-oxoglutarate + O2 = [(1R)-1-hydroxy-2-(trimethylamino)ethyl]phosphonate + succinate + CO2. In terms of biological role, involved in the degradation of the naturally occurring organophosphonate 2-(trimethylammonio)ethylphosphonate (TMAEP). Catalyzes the hydroxylation of TMAEP to (R)-1-hydroxy-2-(trimethylammonio)ethylphosphonate (OH-TMAEP). Is highly specific for its N-trimethylated substrate. Cannot use gamma-butyrobetaine as substrate. This Leisingera caerulea (Phaeobacter caeruleus) protein is [2-(trimethylamino)ethyl]phosphonate dioxygenase.